We begin with the raw amino-acid sequence, 335 residues long: tRNA N6-adenosine threonylcarbamoyltransferase (335 aa).

Fe cation contacts are provided by His-112 and His-116. Substrate-binding positions include 134–138 (VVSGG), Asp-167, Gly-180, and Asn-273. Asp-301 is a Fe cation binding site.

Belongs to the KAE1 / TsaD family. Requires Fe(2+) as cofactor.

The protein localises to the cytoplasm. The enzyme catalyses L-threonylcarbamoyladenylate + adenosine(37) in tRNA = N(6)-L-threonylcarbamoyladenosine(37) in tRNA + AMP + H(+). Functionally, required for the formation of a threonylcarbamoyl group on adenosine at position 37 (t(6)A37) in tRNAs that read codons beginning with adenine. Is involved in the transfer of the threonylcarbamoyl moiety of threonylcarbamoyl-AMP (TC-AMP) to the N6 group of A37, together with TsaE and TsaB. TsaD likely plays a direct catalytic role in this reaction. The polypeptide is tRNA N6-adenosine threonylcarbamoyltransferase (Shouchella clausii (strain KSM-K16) (Alkalihalobacillus clausii)).